Consider the following 294-residue polypeptide: Nucleotide-binding protein A2cp1_0165 (294 aa).

17–24 (GVSGSGKS) is a binding site for ATP. 68–71 (DARE) contributes to the GTP binding site.

It belongs to the RapZ-like family.

Displays ATPase and GTPase activities. The polypeptide is Nucleotide-binding protein A2cp1_0165 (Anaeromyxobacter dehalogenans (strain 2CP-1 / ATCC BAA-258)).